The following is a 275-amino-acid chain: Transcription regulator AOL_s00215g275 (275 aa).

2 disordered regions span residues 13–65 (TPLP…SSIG) and 84–108 (ILQQ…RQRL). The span at 14-26 (PLPSLNSSRSPQR) shows a compositional bias: polar residues. Residues 27-40 (TPSLGSSSTSSLSP) show a composition bias toward low complexity. Over residues 47–60 (TPSTPESNDSGLTL) the composition is skewed to polar residues. Over residues 88–106 (KSRHQNQPSRRHKQKNRRQ) the composition is skewed to basic residues.

In terms of biological role, regulatory protein; part of the gene cluster that mediates the biosynthesis of sesquiterpenyl epoxy-cyclohexenoids (SECs) such as anthrobotrisins and arthrosporols, metabolites that possess a novel hybrid carbon skeleton consisting of a polyketide-derived epoxycyclohexenol combined with a terpenoid-derived monocyclic sesquiterpenol substructure (PKS-PTS hybrid). The SEC pathway plays an important role for fungal soil colonization via decreasing fungal nematode-capturing ability. AOL_s00215g275 can perform multiple functions in fungal growth and development via regulating the SEC biosynthesis, TCA cycle, and septa formation. Also involved in inhibiting conidial formation, germination, and nematicidal activity but promotes trap production. Plays a role in fungal resistances and significantly regulates the fungal morphology and responses to chemical stressors such as cell-wall-perturbing agents (SDS and Congo red), osmotic agents (NaCl and sorbitol), or the oxidant H(2)O(2). The protein is Transcription regulator AOL_s00215g275 of Arthrobotrys oligospora (strain ATCC 24927 / CBS 115.81 / DSM 1491) (Nematode-trapping fungus).